Consider the following 199-residue polypeptide: Transmembrane protein 223 (199 aa).

The Mitochondrial matrix portion of the chain corresponds to 1 to 43 (MVASVPLRNVSHLLSVLRSQNVPRYLQNGVPRDVLLFRHERGR). Residues 44–64 (FFAILGLFCAGQGIFWTSLAV) traverse the membrane as a helical segment. The Mitochondrial intermembrane portion of the chain corresponds to 65–94 (AALSRPLSRVPAEAPNRSYQDLRSALWRYG). Residues 95–115 (LAVGCGTMGVLVLGAGLLYSL) form a helical membrane-spanning segment. Residues 116 to 199 (RSVRSVMLLA…DNTVGAYRSL (84 aa)) are Mitochondrial matrix-facing.

The protein belongs to the TMEM223 family. In terms of assembly, associates with the mitochondrial ribosome.

It is found in the mitochondrion inner membrane. In terms of biological role, mitochondrial ribosome-associated protein involved in the first steps of cytochrome c oxidase complex (complex IV) biogenesis. Stimulates the translation of MT-CO1 mRNA and is a constituent of early MT-CO1 assembly intermediates. The sequence is that of Transmembrane protein 223 from Mus musculus (Mouse).